Reading from the N-terminus, the 596-residue chain is Choline dehydrogenase, mitochondrial (596 aa).

The transit peptide at 1–34 (MWQVLRGWRKGWQSPRGALAWAVQGQPCPPCSRA) directs the protein to the mitochondrion. 44–73 (TFVVVGAGSAGCVLASRLTEDPNHRVLLLE) is an FAD binding site. Lys-438 carries the post-translational modification N6-succinyllysine. Lys-486 and Lys-498 each carry N6-acetyllysine; alternate. 2 positions are modified to N6-succinyllysine; alternate: Lys-486 and Lys-498. His-513 functions as the Proton acceptor in the catalytic mechanism. Lys-582 carries the post-translational modification N6-acetyllysine.

The protein belongs to the GMC oxidoreductase family. FAD is required as a cofactor. Acetylation of Lys-498 is observed in liver mitochondria from fasted mice but not from fed mice.

The protein resides in the mitochondrion inner membrane. It catalyses the reaction choline + A = betaine aldehyde + AH2. Its pathway is amine and polyamine biosynthesis; betaine biosynthesis via choline pathway; betaine aldehyde from choline (cytochrome c reductase route): step 1/1. The polypeptide is Choline dehydrogenase, mitochondrial (Chdh) (Mus musculus (Mouse)).